A 150-amino-acid chain; its full sequence is Large ribosomal subunit protein bL9 (150 aa).

The protein belongs to the bacterial ribosomal protein bL9 family.

Binds to the 23S rRNA. The polypeptide is Large ribosomal subunit protein bL9 (Clavibacter sepedonicus (Clavibacter michiganensis subsp. sepedonicus)).